We begin with the raw amino-acid sequence, 433 residues long: Dihydrolipoyllysine-residue acetyltransferase component of pyruvate dehydrogenase complex (433 aa).

Positions 2-77 constitute a Lipoyl-binding domain; that stretch reads AFEFRLPDIG…VVGDVIVKID (76 aa). The residue at position 43 (Lys43) is an N6-lipoyllysine. Disordered stretches follow at residues 80–134 and 164–204; these read DAEE…PSVR and YLNG…FPET. Basic and acidic residues-rich tracts occupy residues 84-103 and 117-126; these read MQFK…KEQE and EKTEVDESKT. In terms of domain architecture, Peripheral subunit-binding (PSBD) spans 128-165; that stretch reads KAMPSVRKYARENGVNIKAVNGSGKNGRITKEDIDAYL. Residues 166-185 show a composition bias toward low complexity; the sequence is NGGSSEEGSNTSAASESTSS. His404 is a catalytic residue.

It belongs to the 2-oxoacid dehydrogenase family. In terms of assembly, forms a 24-polypeptide structural core with octahedral symmetry. (R)-lipoate serves as cofactor.

It catalyses the reaction N(6)-[(R)-dihydrolipoyl]-L-lysyl-[protein] + acetyl-CoA = N(6)-[(R)-S(8)-acetyldihydrolipoyl]-L-lysyl-[protein] + CoA. Its function is as follows. The pyruvate dehydrogenase complex catalyzes the overall conversion of pyruvate to acetyl-CoA and CO(2). It contains multiple copies of three enzymatic components: pyruvate dehydrogenase (E1), dihydrolipoamide acetyltransferase (E2) and lipoamide dehydrogenase (E3). The polypeptide is Dihydrolipoyllysine-residue acetyltransferase component of pyruvate dehydrogenase complex (pdhC) (Staphylococcus epidermidis (strain ATCC 35984 / DSM 28319 / BCRC 17069 / CCUG 31568 / BM 3577 / RP62A)).